A 254-amino-acid polypeptide reads, in one-letter code: D-aminoacyl-tRNA deacylase (254 aa).

Residues 61–82 (KPTLTVHTPGNLTDDNSHGGNP) are disordered. Positions 65–74 (TVHTPGNLTD) are enriched in polar residues.

Belongs to the DtdA deacylase family. As to quaternary structure, monomer. Requires Zn(2+) as cofactor.

The enzyme catalyses a D-aminoacyl-tRNA + H2O = a tRNA + a D-alpha-amino acid + H(+). The catalysed reaction is glycyl-tRNA(Ala) + H2O = tRNA(Ala) + glycine + H(+). D-aminoacyl-tRNA deacylase with broad substrate specificity. By recycling D-aminoacyl-tRNA to D-amino acids and free tRNA molecules, this enzyme counteracts the toxicity associated with the formation of D-aminoacyl-tRNA entities in vivo. In Methanococcus maripaludis (strain DSM 14266 / JCM 13030 / NBRC 101832 / S2 / LL), this protein is D-aminoacyl-tRNA deacylase.